Consider the following 195-residue polypeptide: Shikimate kinase (195 aa).

G21–S26 serves as a coordination point for ATP. Position 25 (T25) interacts with Mg(2+). Residues D43, R67, and G89 each contribute to the substrate site. A disordered region spans residues R128–R148. ATP is bound at residue R131. Residues P132–E141 show a composition bias toward polar residues. R158 contributes to the substrate binding site.

Belongs to the shikimate kinase family. Monomer. The cofactor is Mg(2+).

The protein localises to the cytoplasm. It carries out the reaction shikimate + ATP = 3-phosphoshikimate + ADP + H(+). It functions in the pathway metabolic intermediate biosynthesis; chorismate biosynthesis; chorismate from D-erythrose 4-phosphate and phosphoenolpyruvate: step 5/7. Functionally, catalyzes the specific phosphorylation of the 3-hydroxyl group of shikimic acid using ATP as a cosubstrate. The chain is Shikimate kinase from Syntrophus aciditrophicus (strain SB).